The chain runs to 287 residues: Putative sugar uptake protein spyM18_2243 (287 aa).

Transmembrane regions (helical) follow at residues 4-26 (IFYA…KIGG), 33-50 (LGMT…WLIV), 55-72 (TLQL…WSIG), 85-107 (VSVA…GVLV), 117-134 (FVVG…FYFS), 154-171 (FRAL…AVLF), 181-200 (SVIL…FMSF), 207-229 (YVIK…LLAA), 234-256 (LAIA…ILFL), and 268-285 (VVTG…LGVV).

Belongs to the GRP transporter (TC 2.A.7.5) family.

Its subcellular location is the cell membrane. This is Putative sugar uptake protein spyM18_2243 from Streptococcus pyogenes serotype M18 (strain MGAS8232).